A 625-amino-acid polypeptide reads, in one-letter code: Chaperone protein DnaK (625 aa).

The residue at position 197 (Thr-197) is a Phosphothreonine; by autocatalysis. The interval 598–625 (MYKKDDNASGEQSGGKKKDDDVIDAEVE) is disordered.

Belongs to the heat shock protein 70 family.

In terms of biological role, acts as a chaperone. This is Chaperone protein DnaK from Campylobacter curvus (strain 525.92).